The following is a 479-amino-acid chain: Ribulose bisphosphate carboxylase large chain 2 (479 aa).

Asn-116 and Thr-166 together coordinate substrate. The active-site Proton acceptor is Lys-168. Lys-170 is a substrate binding site. Lys-194, Asp-196, and Glu-197 together coordinate Mg(2+). Lys-194 bears the N6-carboxylysine mark. His-287 serves as the catalytic Proton acceptor. The substrate site is built by Arg-288, His-320, and Ser-372.

Belongs to the RuBisCO large chain family. Type I subfamily. As to quaternary structure, heterohexadecamer of 8 large chains and 8 small chains. It depends on Mg(2+) as a cofactor.

The catalysed reaction is 2 (2R)-3-phosphoglycerate + 2 H(+) = D-ribulose 1,5-bisphosphate + CO2 + H2O. It catalyses the reaction D-ribulose 1,5-bisphosphate + O2 = 2-phosphoglycolate + (2R)-3-phosphoglycerate + 2 H(+). RuBisCO catalyzes two reactions: the carboxylation of D-ribulose 1,5-bisphosphate, the primary event in carbon dioxide fixation, as well as the oxidative fragmentation of the pentose substrate. Both reactions occur simultaneously and in competition at the same active site. This is Ribulose bisphosphate carboxylase large chain 2 from Bradyrhizobium sp. (strain ORS 278).